Consider the following 955-residue polypeptide: Thyroid hormone receptor-associated protein 3 (955 aa).

The tract at residues Met1–Tyr94 is disordered. At Ser2 the chain carries N-acetylserine. The interval Ser2–Ser190 is required for mRNA splicing activation. The segment covering Ser14–Ser51 has biased composition (basic residues). Arg17 carries the post-translational modification Dimethylated arginine. Over residues His58–Gly75 the composition is skewed to basic and acidic residues. An Asymmetric dimethylarginine modification is found at Arg66. Over residues Arg82 to Tyr94 the composition is skewed to low complexity. Asymmetric dimethylarginine is present on residues Arg101 and Arg108. The interval Ala117–Ser559 is disordered. Over residues Arg121–Ser143 the composition is skewed to basic residues. The segment covering Arg144 to Arg155 has biased composition (basic and acidic residues). Low complexity predominate over residues Ser157–His166. Residues Ser167–Arg188 are compositionally biased toward basic and acidic residues. Residue Lys202 forms a Glycyl lysine isopeptide (Lys-Gly) (interchain with G-Cter in SUMO1); alternate linkage. Lys202 is covalently cross-linked (Glycyl lysine isopeptide (Lys-Gly) (interchain with G-Cter in SUMO2); alternate). Residues Gln204–Ser220 show a composition bias toward polar residues. Lys215 is covalently cross-linked (Glycyl lysine isopeptide (Lys-Gly) (interchain with G-Cter in SUMO2)). Phosphoserine is present on Ser220. Residue Lys221 forms a Glycyl lysine isopeptide (Lys-Gly) (interchain with G-Cter in SUMO2); alternate linkage. Residue Lys221 is modified to N6-acetyllysine; alternate. Residues Ser232, Ser237, Ser240, Ser243, and Ser248 each carry the phosphoserine modification. Lys252 is covalently cross-linked (Glycyl lysine isopeptide (Lys-Gly) (interchain with G-Cter in SUMO2); alternate). Lys252 is subject to N6-methyllysine; alternate. Residues Ser253 and Ser257 each carry the phosphoserine modification. Positions Arg266–Pro276 are enriched in pro residues. The segment covering Gln282–Gly300 has biased composition (polar residues). The segment covering Gly305–Ser331 has biased composition (low complexity). A phosphoserine mark is found at Ser315, Ser320, and Ser323. Position 324 is a phosphothreonine (Thr324). The residue at position 326 (Ser326) is a Phosphoserine. Tyr328 is subject to Phosphotyrosine. Residue Lys333 forms a Glycyl lysine isopeptide (Lys-Gly) (interchain with G-Cter in SUMO2) linkage. Phosphoserine is present on Ser339. Residue Lys346 forms a Glycyl lysine isopeptide (Lys-Gly) (interchain with G-Cter in SUMO2); alternate linkage. Lys346 carries the post-translational modification N6-acetyllysine; alternate. The segment covering Arg347–Ser377 has biased composition (basic and acidic residues). Residues Lys353 and Lys375 each participate in a glycyl lysine isopeptide (Lys-Gly) (interchain with G-Cter in SUMO2) cross-link. Residues Asp359 to Glu955 are required for mRNA decay activity. Phosphoserine is present on residues Ser377 and Ser379. A Glycyl lysine isopeptide (Lys-Gly) (interchain with G-Cter in SUMO1); alternate cross-link involves residue Lys387. Lys387 participates in a covalent cross-link: Glycyl lysine isopeptide (Lys-Gly) (interchain with G-Cter in SUMO2); alternate. Residues Lys389 and Lys396 each participate in a glycyl lysine isopeptide (Lys-Gly) (interchain with G-Cter in SUMO2) cross-link. Thr397 is subject to Phosphothreonine. A Glycyl lysine isopeptide (Lys-Gly) (interchain with G-Cter in SUMO2) cross-link involves residue Lys401. Ser406 and Ser408 each carry phosphoserine. Over residues Leu414–Phe452 the composition is skewed to basic and acidic residues. Residues Lys421 and Lys427 each participate in a glycyl lysine isopeptide (Lys-Gly) (interchain with G-Cter in SUMO2) cross-link. A Phosphoserine modification is found at Ser444. Residue Lys451 forms a Glycyl lysine isopeptide (Lys-Gly) (interchain with G-Cter in SUMO1); alternate linkage. Residues Lys451 and Lys455 each participate in a glycyl lysine isopeptide (Lys-Gly) (interchain with G-Cter in SUMO2); alternate cross-link. An N6-acetyllysine; alternate modification is found at Lys455. Glycyl lysine isopeptide (Lys-Gly) (interchain with G-Cter in SUMO2) cross-links involve residues Lys461 and Lys467. Ser468 carries the post-translational modification Phosphoserine. Residues Lys470 and Lys481 each participate in a glycyl lysine isopeptide (Lys-Gly) (interchain with G-Cter in SUMO2); alternate cross-link. An N6-acetyllysine; alternate mark is found at Lys470 and Lys481. Residue Lys486 forms a Glycyl lysine isopeptide (Lys-Gly) (interchain with G-Cter in SUMO2) linkage. The segment covering Phe495–Phe521 has biased composition (basic and acidic residues). Position 519 is an N6-acetyllysine (Lys519). Lys527 participates in a covalent cross-link: Glycyl lysine isopeptide (Lys-Gly) (interchain with G-Cter in SUMO2); alternate. At Lys527 the chain carries N6-acetyllysine; alternate. Phosphoserine is present on Ser535. Basic and acidic residues predominate over residues Lys540–Ala550. A Glycyl lysine isopeptide (Lys-Gly) (interchain with G-Cter in SUMO2) cross-link involves residue Lys551. ATP is bound at residue Gly552 to Ser559. Residue Lys558 forms a Glycyl lysine isopeptide (Lys-Gly) (interchain with G-Cter in SUMO2); alternate linkage. An N6-acetyllysine; alternate modification is found at Lys558. Ser560, Ser562, and Ser575 each carry phosphoserine. Residue Lys602 forms a Glycyl lysine isopeptide (Lys-Gly) (interchain with G-Cter in SUMO2) linkage. 5 positions are modified to phosphoserine: Ser619, Ser622, Ser672, Ser682, and Ser684. The span at Glu663–Asp680 shows a compositional bias: basic and acidic residues. A disordered region spans residues Glu663 to Glu955. Over residues Leu691–His761 the composition is skewed to basic and acidic residues. A Glycyl lysine isopeptide (Lys-Gly) (interchain with G-Cter in SUMO2) cross-link involves residue Lys697. Position 698 is a phosphoserine (Ser698). Glycyl lysine isopeptide (Lys-Gly) (interchain with G-Cter in SUMO2) cross-links involve residues Lys705, Lys709, Lys711, Lys756, and Lys759. Residues Lys762–Asp775 are compositionally biased toward basic residues. Residues Ser779–Ser789 show a composition bias toward low complexity. Lys811 is modified (N6-acetyllysine). Position 845 is an asymmetric dimethylarginine (Arg845). Low complexity predominate over residues Tyr848–Asp859. Thr874 carries the phosphothreonine modification. Residues Lys876 and Lys879 each participate in a glycyl lysine isopeptide (Lys-Gly) (interchain with G-Cter in SUMO2) cross-link. The span at Tyr881–Val895 shows a compositional bias: basic and acidic residues. Residues Ser928 and Ser939 each carry the phosphoserine modification. Residues Glu930–Gly940 show a composition bias toward acidic residues.

This sequence belongs to the BCLAF1/THRAP3 family. Associated with the large multiprotein complex TRAP (Mediator complex-like). Interacts with SFPQ; the interaction is dependent on SFPQ phosphorylation at 'Thr-687' and inhibits binding of SFPQ to an ESS1 exonic splicing silencer element-containing RNA. Interacts with NXF1. Component of the SNARP complex which consists at least of SNIP1, SNW1, THRAP3, BCLAF1 and PNN. Associated with spliced mRNP complexes. Interacts with HELZ2 and PPARG. Interacts with CLOCK and BMAL1. Component of a MACOM-like complex, named WTAP complex, composed of WTAP, ZC3H13, CBLL1, KIAA1429, RBM15, BCLAF1 and THRAP3. ADP-ribosylation during genotoxic stress promotes accumulation in nuclear speckles. As to expression, ubiquitous.

Its subcellular location is the nucleus. The protein resides in the nucleoplasm. It is found in the nucleus speckle. Involved in pre-mRNA splicing. Remains associated with spliced mRNA after splicing which probably involves interactions with the exon junction complex (EJC). Can trigger mRNA decay which seems to be independent of nonsense-mediated decay involving premature stop codons (PTC) recognition. May be involved in nuclear mRNA decay. Involved in regulation of signal-induced alternative splicing. During splicing of PTPRC/CD45 is proposed to sequester phosphorylated SFPQ from PTPRC/CD45 pre-mRNA in resting T-cells. Involved in cyclin-D1/CCND1 mRNA stability probably by acting as component of the SNARP complex which associates with both the 3'end of the CCND1 gene and its mRNA. Involved in response to DNA damage. Is excluced from DNA damage sites in a manner that parallels transcription inhibition; the function may involve the SNARP complex. Initially thought to play a role in transcriptional coactivation through its association with the TRAP complex; however, it is not regarded as a stable Mediator complex subunit. Cooperatively with HELZ2, enhances the transcriptional activation mediated by PPARG, maybe through the stabilization of the PPARG binding to DNA in presence of ligand. May play a role in the terminal stage of adipocyte differentiation. Plays a role in the positive regulation of the circadian clock. Acts as a coactivator of the CLOCK-BMAL1 heterodimer and promotes its transcriptional activator activity and binding to circadian target genes. The chain is Thyroid hormone receptor-associated protein 3 from Homo sapiens (Human).